The sequence spans 858 residues: Leucine--tRNA ligase (858 aa).

A 'HIGH' region motif is present at residues 42–52 (PYPSGRLHMGH). The 'KMSKS' region motif lies at 618 to 622 (KMSKS). K621 lines the ATP pocket.

It belongs to the class-I aminoacyl-tRNA synthetase family.

It localises to the cytoplasm. It carries out the reaction tRNA(Leu) + L-leucine + ATP = L-leucyl-tRNA(Leu) + AMP + diphosphate. The sequence is that of Leucine--tRNA ligase from Aliivibrio fischeri (strain ATCC 700601 / ES114) (Vibrio fischeri).